A 158-amino-acid chain; its full sequence is Small ribosomal subunit protein uS15 (158 aa).

Basic residues predominate over residues 1–18; it reads MARMHARKRGKSGSKRPP. Positions 1 to 21 are disordered; that stretch reads MARMHARKRGKSGSKRPPRTA.

It belongs to the universal ribosomal protein uS15 family. In terms of assembly, part of the 30S ribosomal subunit.

The chain is Small ribosomal subunit protein uS15 from Pyrococcus furiosus (strain ATCC 43587 / DSM 3638 / JCM 8422 / Vc1).